The chain runs to 341 residues: Radial spoke head 14 homolog (341 aa).

ARM repeat units follow at residues 16-55, 57-96, 99-138, 139-178, 180-217, 219-258, 260-300, and 302-339; these read PTKAAIAYGCRALSKLNEELQSRDLLTRQKALVALCDLMH, PEYVYEAINIGCLESLKTLLQDDDNLVRIKTTEVLYIMAT, VGRVGFLKHDIIQALSLLLSDHQTLCRENLHQAYKHLAQL, PKGAQGIVQSGLIPSLVRKLQKEEDHIQEIILDTLALCLQ, DATEALESQAVPCLKEKLLSQNSEIRSKAARALIAISI, LDGKNQVWKNKVIPILVTLLSDTDEEVKANAAGALMHATV, TEGK…MLAE, and PEGRKLLLSHVPIFRYLLAHKNEAIQRAAEVAIKVIEW.

It belongs to the flagellar radial spoke RSP14 family. Component of the axonemal radial spoke complex 1 (RS1), at least composed of spoke head proteins RSPH1, RSPH3, RSPH9 and the cilia-specific component RSPH4A or sperm-specific component RSPH6A, spoke stalk proteins RSPH14, DNAJB13, DYDC1, ROPN1L and NME5, and the anchor protein IQUB.

The protein resides in the cytoplasm. Its subcellular location is the cytoskeleton. The protein localises to the flagellum axoneme. Functions as part of axonemal radial spoke complexes that play an important part in the motility of sperm and cilia. The sequence is that of Radial spoke head 14 homolog from Mus musculus (Mouse).